The primary structure comprises 95 residues: MRTLSLLTLLALAALCLSDLTDAKPSGPESDKAFMSKQEGNKVVNRLRRYLGASVPSPDPLEPTREQCELNPACDELSDQYGLKTAYKRIYGITI.

An N-terminal signal peptide occupies residues 1 to 23 (MRTLSLLTLLALAALCLSDLTDA). The propeptide occupies 24–49 (KPSGPESDKAFMSKQEGNKVVNRLRR). The Gla domain maps to 46–92 (RLRRYLGASVPSPDPLEPTREQCELNPACDELSDQYGLKTAYKRIYG). Ca(2+)-binding residues include glutamate 62, glutamate 66, glutamate 69, and aspartate 75. A disulfide bridge connects residues cysteine 68 and cysteine 74.

Belongs to the osteocalcin/matrix Gla protein family. Post-translationally, gamma-carboxyglutamate residues are formed by vitamin K dependent carboxylation by GGCX. These residues are essential for the binding of calcium. Carboxylated in a Ptprv/Esp-dependent process. Decarboxylation promotes the hormone activity. In terms of tissue distribution, bone.

The protein localises to the secreted. In terms of biological role, the carboxylated form is one of the main organic components of the bone matrix, which constitutes 1-2% of the total bone protein: it acts as a negative regulator of bone formation and is required to limit bone formation without impairing bone resorption or mineralization. The carboxylated form binds strongly to apatite and calcium. Functionally, the uncarboxylated form acts as a hormone secreted by osteoblasts, which regulates different cellular processes, such as energy metabolism, male fertility and brain development. Regulates of energy metabolism by acting as a hormone favoring pancreatic beta-cell proliferation, insulin secretion and sensitivity and energy expenditure. Uncarboxylated osteocalcin hormone also promotes testosterone production in the testes: acts as a ligand for G protein-coupled receptor GPRC6A at the surface of Leydig cells, initiating a signaling response that promotes the expression of enzymes required for testosterone synthesis in a CREB-dependent manner. Also acts as a regulator of brain development: osteocalcin hormone crosses the blood-brain barrier and acts as a ligand for GPR158 on neurons, initiating a signaling response that prevents neuronal apoptosis in the hippocampus, favors the synthesis of all monoamine neurotransmitters and inhibits that of gamma-aminobutyric acid (GABA). Osteocalcin also crosses the placenta during pregnancy and maternal osteocalcin is required for fetal brain development. The sequence is that of Osteocalcin-2 (Bglap2) from Mus musculus (Mouse).